Reading from the N-terminus, the 264-residue chain is Synaptophysin-like protein 2 (264 aa).

Residues 1–33 (MSSTESPSRAADKSPRQQVDRLLEGLRWRRLEE) lie on the Cytoplasmic side of the membrane. An MARVEL domain is found at 30–238 (RLEEPLGFIK…NCWFVFKETP (209 aa)). Residues 34-54 (PLGFIKVLQWLFAIFAFGSCG) form a helical membrane-spanning segment. At 55 to 116 (SYSGETGAMV…LMGDFSAPAE (62 aa)) the chain is on the vesicular side. Residues 117-137 (FFVTLGIFSFFYTMAALVVYL) traverse the membrane as a helical segment. At 138-150 (RFHKLYTENKRFP) the chain is on the cytoplasmic side. The helical transmembrane segment at 151-171 (LVDFCVTVSFTFFWLVAAAAW) threads the bilayer. Topologically, residues 172-213 (GKGLTDVKGATRPSSLTAAMSVCHGEEAVCSAGATPSMGLAN) are vesicular. N213 carries an N-linked (GlcNAc...) asparagine glycan. A helical membrane pass occupies residues 214–234 (ISVLFGFINFFLWAGNCWFVF). Residues 235–264 (KETPWHGQGQDQGQGPSQESAAEQGAVEKQ) lie on the Cytoplasmic side of the membrane. A disordered region spans residues 242–264 (QGQDQGQGPSQESAAEQGAVEKQ).

This sequence belongs to the synaptophysin/synaptobrevin family. Skeletal muscle.

It localises to the membrane. Functionally, involved in communication between the T-tubular and junctional sarcoplasmic reticulum (SR) membranes. The chain is Synaptophysin-like protein 2 (SYPL2) from Oryctolagus cuniculus (Rabbit).